Consider the following 254-residue polypeptide: MTQVGQYIISNNSTSNLILHITKKLVSGESLFNLKQEEILIIQNVCTLMFSHGIQILLLRETLHNIGVSDLVVLNRKVPDEFWFKIFCMIKQRSGSEILKHIFSEENAAQLSKKLHHTGIVKQIIESFFLDEFGLSITIPAEIIHDGNIMFSIGAIYNHRLLKLCRYFNKFWGQEVYEPFIRKICKHLWFGYLIFFDKIKISHGAFSQQKPEHRNGLFTFIQNDFKVFCGIVEKEAKVTECNLSDLFSIGPLQF.

It belongs to the herpesviridae UL79 family.

In Homo sapiens (Human), this protein is Protein U52 (U52).